Here is a 189-residue protein sequence, read N- to C-terminus: UPF0301 protein RT0098 (189 aa).

This sequence belongs to the UPF0301 (AlgH) family.

The protein is UPF0301 protein RT0098 of Rickettsia typhi (strain ATCC VR-144 / Wilmington).